The sequence spans 427 residues: Trigger factor (427 aa).

The 86-residue stretch at 163–248 (GDTVVIDFVG…IHEVKAKEVP (86 aa)) folds into the PPIase FKBP-type domain.

It belongs to the FKBP-type PPIase family. Tig subfamily.

It localises to the cytoplasm. It catalyses the reaction [protein]-peptidylproline (omega=180) = [protein]-peptidylproline (omega=0). Involved in protein export. Acts as a chaperone by maintaining the newly synthesized protein in an open conformation. Functions as a peptidyl-prolyl cis-trans isomerase. This Streptococcus pneumoniae (strain JJA) protein is Trigger factor.